The primary structure comprises 106 residues: UPF0091 protein RC0354 (106 aa).

It belongs to the UPF0091 family.

In Rickettsia conorii (strain ATCC VR-613 / Malish 7), this protein is UPF0091 protein RC0354.